Consider the following 168-residue polypeptide: Large ribosomal subunit protein uL10 (168 aa).

It belongs to the universal ribosomal protein uL10 family. Part of the ribosomal stalk of the 50S ribosomal subunit. The N-terminus interacts with L11 and the large rRNA to form the base of the stalk. The C-terminus forms an elongated spine to which L12 dimers bind in a sequential fashion forming a multimeric L10(L12)X complex.

Forms part of the ribosomal stalk, playing a central role in the interaction of the ribosome with GTP-bound translation factors. The sequence is that of Large ribosomal subunit protein uL10 from Laribacter hongkongensis (strain HLHK9).